We begin with the raw amino-acid sequence, 296 residues long: Ribosomal RNA small subunit methyltransferase H (296 aa).

Residues 30 to 32 (GGH), Asp49, Phe77, Asp95, and Gln102 contribute to the S-adenosyl-L-methionine site.

The protein belongs to the methyltransferase superfamily. RsmH family.

It is found in the cytoplasm. The enzyme catalyses cytidine(1402) in 16S rRNA + S-adenosyl-L-methionine = N(4)-methylcytidine(1402) in 16S rRNA + S-adenosyl-L-homocysteine + H(+). In terms of biological role, specifically methylates the N4 position of cytidine in position 1402 (C1402) of 16S rRNA. The polypeptide is Ribosomal RNA small subunit methyltransferase H (Hydrogenobaculum sp. (strain Y04AAS1)).